We begin with the raw amino-acid sequence, 153 residues long: MEKLDSLNEAFKSLLREEKFGSQSEIVTALQEMGFEHINQSKVSRMLSKFGAVRTRNTKMEMVYHLPAELGIPTTSSPLRNLVIDIDHNESLIVVRTSPGAAQLIARLLDSMGKAEGILGTIAGDDTIFITPTRDTSISTLIATITELFDSSL.

It belongs to the ArgR family.

The protein localises to the cytoplasm. It participates in amino-acid biosynthesis; L-arginine biosynthesis [regulation]. In terms of biological role, regulates arginine biosynthesis genes. The polypeptide is Arginine repressor (Glaesserella parasuis serovar 5 (strain SH0165) (Haemophilus parasuis)).